Consider the following 1289-residue polypeptide: uncharacterized protein (1289 aa).

The signal sequence occupies residues 1–23 (MRKYTVIASILLSFLSVLSGGHH). The region spanning 141-277 (EGYQADLAHI…VVISTNTGKD (137 aa)) is the LTD domain.

This is an uncharacterized protein from Bacillus subtilis (strain 168).